Consider the following 552-residue polypeptide: Glutamate--tRNA ligase (552 aa).

The short motif at 102-112 (PNPSGPLHIGH) is the 'HIGH' region element.

It belongs to the class-I aminoacyl-tRNA synthetase family. Glutamate--tRNA ligase type 2 subfamily.

The protein localises to the cytoplasm. The enzyme catalyses tRNA(Glu) + L-glutamate + ATP = L-glutamyl-tRNA(Glu) + AMP + diphosphate. In terms of biological role, catalyzes the attachment of glutamate to tRNA(Glu) in a two-step reaction: glutamate is first activated by ATP to form Glu-AMP and then transferred to the acceptor end of tRNA(Glu). This chain is Glutamate--tRNA ligase, found in Methanothermobacter marburgensis (strain ATCC BAA-927 / DSM 2133 / JCM 14651 / NBRC 100331 / OCM 82 / Marburg) (Methanobacterium thermoautotrophicum).